The chain runs to 331 residues: MAASSTATRLSPPRLHAPTTPSPHLPLRRSRFSPLRAAKLEAVLTIGTHLIPHPRKAETGGEDAFFVNGDDGGVFAVADGVSGWAEKDVNPALFSRELMAHTSTFLKDEEVNHDPQLLLMKAHAATTSVGSATVIIAMLEKTGILKIASVGDCGLKVIRKGQVMFSTCPQEHYFDCPYQLSSEAIGQTYLDALVCTVNLMEGDMIVSGSDGFFDNIFDQEIVSVISESPGVDEAAKALAELARKHSVDVTFDSPYSMEARSRGFDVPSWKKFIGGKLIGGKMDDITVIVAQVKAVMIPDDEGVDEEKGQGDEQGSAVAVASSEQKEDSITT.

Residues 1–29 are disordered; sequence MAASSTATRLSPPRLHAPTTPSPHLPLRR. Residues 48 to 292 enclose the PPM-type phosphatase domain; the sequence is THLIPHPRKA…DDITVIVAQV (245 aa). Positions 79, 80, 210, and 283 each coordinate Mn(2+). Positions 300 to 331 are disordered; sequence DEGVDEEKGQGDEQGSAVAVASSEQKEDSITT.

The protein belongs to the PP2C family. Mg(2+) serves as cofactor. The cofactor is Mn(2+).

It catalyses the reaction O-phospho-L-seryl-[protein] + H2O = L-seryl-[protein] + phosphate. It carries out the reaction O-phospho-L-threonyl-[protein] + H2O = L-threonyl-[protein] + phosphate. In Oryza sativa subsp. japonica (Rice), this protein is Probable protein phosphatase 2C 1.